A 129-amino-acid chain; its full sequence is Glyoxalase domain-containing protein 5 homolog (129 aa).

The 124-residue stretch at 5–128 (RLDHLVLTVS…DYNLIEISNY (124 aa)) folds into the VOC domain.

It belongs to the glyoxalase I family.

The chain is Glyoxalase domain-containing protein 5 homolog (glod5) from Dictyostelium discoideum (Social amoeba).